Consider the following 272-residue polypeptide: 4-hydroxy-tetrahydrodipicolinate reductase (272 aa).

NAD(+)-binding positions include 10-15, Glu36, 100-102, and 124-127; these read GAGGRM, GTT, and SGNM. His157 serves as the catalytic Proton donor/acceptor. A (S)-2,3,4,5-tetrahydrodipicolinate-binding site is contributed by His158. Catalysis depends on Lys161, which acts as the Proton donor. 167-168 is a binding site for (S)-2,3,4,5-tetrahydrodipicolinate; the sequence is GT.

This sequence belongs to the DapB family.

It localises to the cytoplasm. It catalyses the reaction (S)-2,3,4,5-tetrahydrodipicolinate + NAD(+) + H2O = (2S,4S)-4-hydroxy-2,3,4,5-tetrahydrodipicolinate + NADH + H(+). The enzyme catalyses (S)-2,3,4,5-tetrahydrodipicolinate + NADP(+) + H2O = (2S,4S)-4-hydroxy-2,3,4,5-tetrahydrodipicolinate + NADPH + H(+). Its pathway is amino-acid biosynthesis; L-lysine biosynthesis via DAP pathway; (S)-tetrahydrodipicolinate from L-aspartate: step 4/4. Its function is as follows. Catalyzes the conversion of 4-hydroxy-tetrahydrodipicolinate (HTPA) to tetrahydrodipicolinate. The polypeptide is 4-hydroxy-tetrahydrodipicolinate reductase (Afipia carboxidovorans (strain ATCC 49405 / DSM 1227 / KCTC 32145 / OM5) (Oligotropha carboxidovorans)).